The chain runs to 243 residues: tRNA (guanine-N(1)-)-methyltransferase (243 aa).

S-adenosyl-L-methionine contacts are provided by residues Gly113 and 133–138 (IGDFVL).

The protein belongs to the RNA methyltransferase TrmD family. Homodimer.

The protein localises to the cytoplasm. The catalysed reaction is guanosine(37) in tRNA + S-adenosyl-L-methionine = N(1)-methylguanosine(37) in tRNA + S-adenosyl-L-homocysteine + H(+). In terms of biological role, specifically methylates guanosine-37 in various tRNAs. This is tRNA (guanine-N(1)-)-methyltransferase from Bacillus licheniformis (strain ATCC 14580 / DSM 13 / JCM 2505 / CCUG 7422 / NBRC 12200 / NCIMB 9375 / NCTC 10341 / NRRL NRS-1264 / Gibson 46).